Consider the following 421-residue polypeptide: GTPase Obg (421 aa).

The region spanning 4-161 is the Obg domain; sequence LHFIDEAFNE…FKIKIQLKVL (158 aa). In terms of domain architecture, OBG-type G spans 162–327; it reads ADVGLLGFPS…LKYAIKNLLQ (166 aa). GTP is bound by residues 168–175, 193–197, 214–217, 281–284, and 308–310; these read GFPSVGKS, FTTLF, DLPG, NKMD, and SLI. Positions 175 and 195 each coordinate Mg(2+). The OCT domain occupies 343-421; it reads DLNSETQTFT…ICNYLFDFVI (79 aa).

Belongs to the TRAFAC class OBG-HflX-like GTPase superfamily. OBG GTPase family. Monomer. It depends on Mg(2+) as a cofactor.

It is found in the cytoplasm. Functionally, an essential GTPase which binds GTP, GDP and possibly (p)ppGpp with moderate affinity, with high nucleotide exchange rates and a fairly low GTP hydrolysis rate. Plays a role in control of the cell cycle, stress response, ribosome biogenesis and in those bacteria that undergo differentiation, in morphogenesis control. This is GTPase Obg from Phytoplasma australiense.